Here is a 331-residue protein sequence, read N- to C-terminus: Ketol-acid reductoisomerase (NADP(+)) (331 aa).

The 181-residue stretch at 2 to 182 folds into the KARI N-terminal Rossmann domain; it reads AKMYYDSDCN…GAGRAGILET (181 aa). NADP(+) is bound by residues 25-28, Ser51, and 83-86; these read YGSQ and DEKQ. His108 is an active-site residue. An NADP(+)-binding site is contributed by Gly134. Positions 183–329 constitute a KARI C-terminal knotted domain; the sequence is TFREETETDL…AELRKMMSWL (147 aa). Mg(2+)-binding residues include Asp191, Glu195, Glu227, and Glu231. Ser252 is a binding site for substrate.

Belongs to the ketol-acid reductoisomerase family. Mg(2+) is required as a cofactor.

The enzyme catalyses (2R)-2,3-dihydroxy-3-methylbutanoate + NADP(+) = (2S)-2-acetolactate + NADPH + H(+). The catalysed reaction is (2R,3R)-2,3-dihydroxy-3-methylpentanoate + NADP(+) = (S)-2-ethyl-2-hydroxy-3-oxobutanoate + NADPH + H(+). It functions in the pathway amino-acid biosynthesis; L-isoleucine biosynthesis; L-isoleucine from 2-oxobutanoate: step 2/4. The protein operates within amino-acid biosynthesis; L-valine biosynthesis; L-valine from pyruvate: step 2/4. Its function is as follows. Involved in the biosynthesis of branched-chain amino acids (BCAA). Catalyzes an alkyl-migration followed by a ketol-acid reduction of (S)-2-acetolactate (S2AL) to yield (R)-2,3-dihydroxy-isovalerate. In the isomerase reaction, S2AL is rearranged via a Mg-dependent methyl migration to produce 3-hydroxy-3-methyl-2-ketobutyrate (HMKB). In the reductase reaction, this 2-ketoacid undergoes a metal-dependent reduction by NADPH to yield (R)-2,3-dihydroxy-isovalerate. The chain is Ketol-acid reductoisomerase (NADP(+)) from Ruminiclostridium cellulolyticum (strain ATCC 35319 / DSM 5812 / JCM 6584 / H10) (Clostridium cellulolyticum).